The primary structure comprises 253 residues: 5'-nucleotidase SurE (253 aa).

Residues Asp8, Asp9, Ser39, and Asn91 each contribute to the a divalent metal cation site.

This sequence belongs to the SurE nucleotidase family. It depends on a divalent metal cation as a cofactor.

The protein resides in the cytoplasm. The catalysed reaction is a ribonucleoside 5'-phosphate + H2O = a ribonucleoside + phosphate. Functionally, nucleotidase that shows phosphatase activity on nucleoside 5'-monophosphates. The protein is 5'-nucleotidase SurE of Leptothrix cholodnii (strain ATCC 51168 / LMG 8142 / SP-6) (Leptothrix discophora (strain SP-6)).